A 178-amino-acid polypeptide reads, in one-letter code: Probable DNA-directed RNA polymerase subunit delta (178 aa).

One can recognise an HTH HARE-type domain in the interval 14–81 (LSLIDVAHFI…GNNTWGLRAW (68 aa)). 2 disordered regions span residues 89–122 (EEVQ…DYDD) and 141–178 (LDED…PEDK). Acidic residues-rich tracts occupy residues 105–122 (DDDD…DYDD), 141–150 (LDEDEDDDDH), and 161–178 (TVED…PEDK).

It belongs to the RpoE family. RNAP is composed of a core of 2 alpha, a beta and a beta' subunits. The core is associated with a delta subunit and one of several sigma factors.

Participates in both the initiation and recycling phases of transcription. In the presence of the delta subunit, RNAP displays an increased specificity of transcription, a decreased affinity for nucleic acids, and an increased efficiency of RNA synthesis because of enhanced recycling. This is Probable DNA-directed RNA polymerase subunit delta from Listeria innocua serovar 6a (strain ATCC BAA-680 / CLIP 11262).